A 386-amino-acid chain; its full sequence is ATP synthase gamma chain 2, chloroplastic (386 aa).

Residues 1 to 22 (MTGSISTSWLLSSPSNSNSASS) are disordered. The transit peptide at 1-60 (MTGSISTSWLLSSPSNSNSASSSESYSFIATLKPVRYYPFQSLTPNRISSRSPLPSIQIR) directs the protein to the chloroplast. The active site involves cysteine 149. An intrachain disulfide couples cysteine 260 to cysteine 266.

The protein belongs to the ATPase gamma chain family. In terms of assembly, F-type ATPases have 2 components, CF(1) - the catalytic core - and CF(0) - the membrane proton channel. CF(1) has five subunits: alpha(3), beta(3), gamma(1), delta(1), epsilon(1). CF(0) has four main subunits: a, b, b' and c.

It localises to the plastid. The protein localises to the chloroplast thylakoid membrane. Functionally, produces ATP from ADP in the presence of a proton gradient across the membrane. The gamma chain is believed to be important in regulating ATPase activity and the flow of protons through the CF(0) complex. This chain is ATP synthase gamma chain 2, chloroplastic (ATPC2), found in Arabidopsis thaliana (Mouse-ear cress).